The chain runs to 341 residues: Ketol-acid reductoisomerase (NADP(+)) (341 aa).

In terms of domain architecture, KARI N-terminal Rossmann spans 1–182 (MATIYYDKDA…GCTRAGVLET (182 aa)). Residues 25 to 28 (YGSQ), Ser-51, Ser-53, and 83 to 86 (DQTQ) contribute to the NADP(+) site. His-108 is an active-site residue. Position 134 (Gly-134) interacts with NADP(+). The KARI C-terminal knotted domain maps to 183-328 (TFKEETETDL…KRLRDMMSWI (146 aa)). Mg(2+) contacts are provided by Asp-191, Glu-195, Glu-227, and Glu-231. A substrate-binding site is contributed by Ser-252.

It belongs to the ketol-acid reductoisomerase family. It depends on Mg(2+) as a cofactor.

The enzyme catalyses (2R)-2,3-dihydroxy-3-methylbutanoate + NADP(+) = (2S)-2-acetolactate + NADPH + H(+). It carries out the reaction (2R,3R)-2,3-dihydroxy-3-methylpentanoate + NADP(+) = (S)-2-ethyl-2-hydroxy-3-oxobutanoate + NADPH + H(+). It participates in amino-acid biosynthesis; L-isoleucine biosynthesis; L-isoleucine from 2-oxobutanoate: step 2/4. The protein operates within amino-acid biosynthesis; L-valine biosynthesis; L-valine from pyruvate: step 2/4. Its function is as follows. Involved in the biosynthesis of branched-chain amino acids (BCAA). Catalyzes an alkyl-migration followed by a ketol-acid reduction of (S)-2-acetolactate (S2AL) to yield (R)-2,3-dihydroxy-isovalerate. In the isomerase reaction, S2AL is rearranged via a Mg-dependent methyl migration to produce 3-hydroxy-3-methyl-2-ketobutyrate (HMKB). In the reductase reaction, this 2-ketoacid undergoes a metal-dependent reduction by NADPH to yield (R)-2,3-dihydroxy-isovalerate. The protein is Ketol-acid reductoisomerase (NADP(+)) of Anaeromyxobacter dehalogenans (strain 2CP-C).